The sequence spans 307 residues: Protein pid-3 (307 aa).

Component of the pid-1 variant of the PETISCO complex (also called the pid-3, erh-2, tofu-6, and ife-3 small RNA complex) containing at least pid-1, tofu-6, ife-3, pid-3, and erh-2, which is required for the biogenesis of a class of 21 nucleotide PIWI-interacting RNAs (piRNAs) that possess a uracil residue at the 5'-end (also called 21U-RNAs). Within the complex interacts with pid-1; the interaction is direct. Component of the tost-1 variant of the PETISCO complex (also called the pid-3, erh-2, tofu-6, and ife-3 small RNA complex) containing at least tost-1, tofu-6, ife-3, pid-3, and erh-2, which plays an essential role in embryogenesis. Within the complex interacts with tost-1. Within the pid-1 and tost-1 variants of the PETISCO complexes interacts with tofu-6 (via the RRM domain) and erh-2. In contrast to the pid-1 variant of the PETISCO complex, the tost-1 variant of the PETISCO complex plays a minor role in the biogenesis of 21U-RNAs. As to expression, expressed in the germline (at protein level).

The protein localises to the cytoplasm. Its subcellular location is the perinuclear region. The protein resides in the nucleus. Component of the pid-1 and tost-1 variants of the PETISCO complexes, which have roles in the biogenesis of a class of 21 nucleotide PIWI-interacting RNAs (piRNAs) that possess a uracil residue at the 5'-end (also called 21U-RNAs) and embryogenesis, respectively. Within the pid-1 variant of the PETISCO complex may stabilize 21U-RNA precursor molecules. Promotes the biogenesis of 21U-RNAs. Required for chromosome segregation and cell division in early embryos. The protein is Protein pid-3 of Caenorhabditis elegans.